A 283-amino-acid chain; its full sequence is Homeobox protein Hox-C12b (283 aa).

The segment at residues 215-274 is a DNA-binding region (homeobox); that stretch reads TRKKRKPYSKLQLNELEGEFILNEFITRQRRRELSDRLNLTDQQVKIWFQNRRMKKKRLL.

This sequence belongs to the Abd-B homeobox family.

The protein localises to the nucleus. Functionally, sequence-specific transcription factor which is part of a developmental regulatory system that provides cells with specific positional identities on the anterior-posterior axis. The protein is Homeobox protein Hox-C12b (hoxc12b) of Danio rerio (Zebrafish).